Consider the following 273-residue polypeptide: Undecaprenyl-diphosphatase (273 aa).

The next 7 helical transmembrane spans lie at 13–35 (GLVEGFTEFLPISSTGHLIVFGN), 45–62 (VFEIAIQLGAVLAVVFEY), 82–102 (FVLNLAIAFIPAAVMGLLFDK), 108–128 (LFNPLSVAVMLVLGGFFILWV), 186–206 (TEFSFFLAVPMMVAATAYDVL), 219–239 (LILIGFIAAFVSGLVAVKALL), and 250–270 (FAYYRIVFGIVIIILWLSGWI).

This sequence belongs to the UppP family.

It is found in the cell inner membrane. It catalyses the reaction di-trans,octa-cis-undecaprenyl diphosphate + H2O = di-trans,octa-cis-undecaprenyl phosphate + phosphate + H(+). In terms of biological role, catalyzes the dephosphorylation of undecaprenyl diphosphate (UPP). Confers resistance to bacitracin. The protein is Undecaprenyl-diphosphatase of Neisseria gonorrhoeae (strain ATCC 700825 / FA 1090).